Here is a 422-residue protein sequence, read N- to C-terminus: MFVRLARIPRITRHYRLGLFSTQPKPKPNEYLYYRNKHKSKMEAPIKRSSSAVSLVELEREPFKVTVIGSGNWGTTIAKVVAENTKANPQVFQERVDMWVFDENIDGTMLTEIINTKHQNVKYLPNIDLPENLVANPDLLKSVEGADILVFNIPHQFLPKIVDQLRGHVEPHVRAISCLKGFEVGKKGVQLLSTYITEELGIECGALSGANLAPEVAKEHWSETTVAYHIPKDYQGDGMDVDHKVLKLLFHRPYFHVSVIDDVAGISIAGALKNVVALGCGFVEGLGWGNNAAAAIQRVGLGEIIKFGQMFFPESRVETYYQESAGVADLITTCSGGRNVRVATHMAKTGKSAEDSEKELLNGQSAQGVITCKEVHEWLSTCEMIEEFPLFEAVYKIVYEDVPMHKLPEMIEELDDIVVAGQ.

NAD(+)-binding positions include 69–74 (GSGNWG), Phe-157, Lys-180, and Ala-213. Lys-180 is a substrate binding site. The active-site Proton acceptor is the Lys-273. NAD(+) is bound by residues Arg-338 and Gln-367. 338–339 (RN) contacts substrate.

This sequence belongs to the NAD-dependent glycerol-3-phosphate dehydrogenase family.

It catalyses the reaction sn-glycerol 3-phosphate + NAD(+) = dihydroxyacetone phosphate + NADH + H(+). This Candida glabrata (strain ATCC 2001 / BCRC 20586 / JCM 3761 / NBRC 0622 / NRRL Y-65 / CBS 138) (Yeast) protein is Glycerol-3-phosphate dehydrogenase [NAD(+)] 2 (GPD2).